The following is an 89-amino-acid chain: UPF0223 protein BCE_4008 (89 aa).

It belongs to the UPF0223 family.

This Bacillus cereus (strain ATCC 10987 / NRS 248) protein is UPF0223 protein BCE_4008.